We begin with the raw amino-acid sequence, 549 residues long: Nucleoporin nup61 (549 aa).

A compositionally biased stretch (basic and acidic residues) spans 1 to 32 (MSKRGADHQLTKDQDDSDDDRHGPVEVPKEAS). Disordered stretches follow at residues 1 to 57 (MSKR…VSSP), 133 to 193 (IEKK…GFSA), and 207 to 438 (FTPK…NEDS). Phosphoserine is present on S17. Positions 40-50 (KIAKPKSRKRP) are enriched in basic residues. Residues 141–165 (QPTSNAVVSEVNPQQQKSQDSSSFV) show a composition bias toward polar residues. Basic and acidic residues-rich tracts occupy residues 170-180 (ASSEKEDKEKP) and 217-228 (SATEAEAKEKET). The span at 229 to 244 (SSNQTATGTAATTTNQ) shows a compositional bias: low complexity. Composition is skewed to basic and acidic residues over residues 282–310 (ASKETKQTHETKDSKSEESKPSNNEKSEN) and 328–339 (KPIKFDTPEKKF). S347 is subject to Phosphoserine. Basic and acidic residues predominate over residues 407 to 421 (SEQEEKENGNDETRS). In terms of domain architecture, RanBD1 spans 416-549 (NDETRSNDSL…NEKKVSKSEN (134 aa)).

Its subcellular location is the nucleus. It localises to the nuclear pore complex. Its function is as follows. Functions as a component of the nuclear pore complex (NPC). NPC components, collectively referred to as nucleoporins (NUPs), can play the role of both NPC structural components and of docking or interaction partners for transiently associated nuclear transport factors. Active directional transport is assured by both, a Phe-Gly (FG) repeat affinity gradient for these transport factors across the NPC and a transport cofactor concentration gradient across the nuclear envelope. May play a role in mitotic spindle formation and/or function. This chain is Nucleoporin nup61 (nup61), found in Schizosaccharomyces pombe (strain 972 / ATCC 24843) (Fission yeast).